Reading from the N-terminus, the 186-residue chain is ADP compounds hydrolase NudE (186 aa).

Glutamate 40 lines the substrate pocket. The 128-residue stretch at 45–172 folds into the Nudix hydrolase domain; sequence TNREAVMIVP…DFNEARNVSA (128 aa). The Nudix box signature appears at 80-101; it reads GLIDPGESVYEAANRELKEEVG. The a divalent metal cation site is built by glutamate 95 and glutamate 99. Position 118 (serine 118) interacts with substrate.

This sequence belongs to the Nudix hydrolase family. Homodimer. The cofactor is Mg(2+).

The enzyme catalyses ADP-D-ribose + H2O = D-ribose 5-phosphate + AMP + 2 H(+). Active on adenosine(5')triphospho(5')adenosine (Ap3A), ADP-ribose, NADH, adenosine(5')diphospho(5')adenosine (Ap2A). This Escherichia coli (strain K12) protein is ADP compounds hydrolase NudE (nudE).